We begin with the raw amino-acid sequence, 188 residues long: Elongation factor P-like protein (188 aa).

It belongs to the elongation factor P family.

In Vibrio cholerae serotype O1 (strain ATCC 39541 / Classical Ogawa 395 / O395), this protein is Elongation factor P-like protein.